The sequence spans 125 residues: Protein 5 (125 aa).

In Hordeum vulgare (Barley), this protein is Protein 5 (5).